Consider the following 163-residue polypeptide: Ribonuclease H (163 aa).

The RNase H type-1 domain maps to 1-142; the sequence is MRKQVAIFTD…CDELARTAAC (142 aa). 4 residues coordinate Mg(2+): aspartate 10, glutamate 48, aspartate 70, and aspartate 134.

The protein belongs to the RNase H family. Monomer. Mg(2+) serves as cofactor.

Its subcellular location is the cytoplasm. The catalysed reaction is Endonucleolytic cleavage to 5'-phosphomonoester.. Its function is as follows. Endonuclease that specifically degrades the RNA of RNA-DNA hybrids. The protein is Ribonuclease H of Sodalis glossinidius (strain morsitans).